A 490-amino-acid polypeptide reads, in one-letter code: Cis-aconitate decarboxylase (490 aa).

The protein belongs to the PrpD family. Homodimer.

It is found in the mitochondrion. It carries out the reaction cis-aconitate + H(+) = itaconate + CO2. Involved in the production of itaconic acid, a soluble unsaturated dicarboxylic acid mainly produced from sugars. The polypeptide is Cis-aconitate decarboxylase (cad1) (Aspergillus terreus (strain NIH 2624 / FGSC A1156)).